Here is an 87-residue protein sequence, read N- to C-terminus: Small ribosomal subunit protein bS20 (87 aa).

Residues 1 to 21 form a disordered region; it reads MANIKQQIKRNKTNEKRRLKN. The span at 7-20 shows a compositional bias: basic residues; sequence QIKRNKTNEKRRLK.

Belongs to the bacterial ribosomal protein bS20 family.

In terms of biological role, binds directly to 16S ribosomal RNA. The chain is Small ribosomal subunit protein bS20 from Phytoplasma mali (strain AT).